Consider the following 646-residue polypeptide: MAQISLTFPDGKAREFPAGITPAEVAASISTSLGKKAISASVDGRHYDLQWPIETDAKIAIHTMADEAQALELIRHDLAHIMARAVQELWPDVKVTIGPVVANGWYYDFDREETFTPEDLGAIEKRMKEIINAREAVKTELWERARAIAYYEERGEPFKVELVQAIPEDQSIRMYWHGGWQDLCRGPHLQHTGQVPADAFKLMSVAGAYWRGDSANKQLQRIYGVAFKTRDELKAYLHMLEEAAKRDHRKLGREMELFHLQEEAPGMVFWHPNGWQIYRTLEDYMRGRLRQAGYKEIRTPQVVDRKLWEASGHWEAYKENMFIVEVEEEHAKEKRINALKPMNCPCHVQVYNQGLKSYRDLPLRLAEFGSCHRYESSGSMHGLMRVRGFVQDDAHIFCTEDQIESECAAFIELLSSVYKDLGFDSFEIKLSTRPEVRIGSDEAWDKVETALENAIRKVGAAYEIDPGEGAFYGPKLDFKLTDAIGRKWQCGTFQVDPNLPTRLGAEYIGEDGAKHRPYMLHRAILGSFERFIGILIENYAGKLPFWLAPRQVVVASIVSDADPYVAEVVAALRARGVRAEADTRNEKINYKVREHSVGKVPVILAIGMQEVEARSVSVRRLGETRTESMGLDQVVDQLAADARIPG.

The TGS domain occupies 1–63; that stretch reads MAQISLTFPD…ETDAKIAIHT (63 aa). The interval 247–544 is catalytic; sequence DHRKLGREME…LIENYAGKLP (298 aa). 3 residues coordinate Zn(2+): cysteine 344, histidine 395, and histidine 521.

Belongs to the class-II aminoacyl-tRNA synthetase family. Homodimer. The cofactor is Zn(2+).

It localises to the cytoplasm. The catalysed reaction is tRNA(Thr) + L-threonine + ATP = L-threonyl-tRNA(Thr) + AMP + diphosphate + H(+). Its function is as follows. Catalyzes the attachment of threonine to tRNA(Thr) in a two-step reaction: L-threonine is first activated by ATP to form Thr-AMP and then transferred to the acceptor end of tRNA(Thr). Also edits incorrectly charged L-seryl-tRNA(Thr). This is Threonine--tRNA ligase from Cereibacter sphaeroides (strain ATCC 17023 / DSM 158 / JCM 6121 / CCUG 31486 / LMG 2827 / NBRC 12203 / NCIMB 8253 / ATH 2.4.1.) (Rhodobacter sphaeroides).